A 353-amino-acid polypeptide reads, in one-letter code: Quinolinate synthase (353 aa).

Iminosuccinate-binding residues include histidine 49 and serine 70. A [4Fe-4S] cluster-binding site is contributed by cysteine 115. Iminosuccinate contacts are provided by residues 141–143 and serine 158; that span reads YAN. Cysteine 202 is a binding site for [4Fe-4S] cluster. Iminosuccinate contacts are provided by residues 228–230 and threonine 245; that span reads HPE. Residue cysteine 299 participates in [4Fe-4S] cluster binding.

It belongs to the quinolinate synthase family. Type 1 subfamily. [4Fe-4S] cluster is required as a cofactor.

Its subcellular location is the cytoplasm. The enzyme catalyses iminosuccinate + dihydroxyacetone phosphate = quinolinate + phosphate + 2 H2O + H(+). It participates in cofactor biosynthesis; NAD(+) biosynthesis; quinolinate from iminoaspartate: step 1/1. Its function is as follows. Catalyzes the condensation of iminoaspartate with dihydroxyacetone phosphate to form quinolinate. This chain is Quinolinate synthase, found in Hahella chejuensis (strain KCTC 2396).